The following is a 377-amino-acid chain: Unsaturated glucuronyl hydrolase (377 aa).

Asp-88 serves as the catalytic Nucleophile. Asp-149 serves as the catalytic Proton donor.

The protein belongs to the glycosyl hydrolase 88 family. In terms of assembly, monomer.

The protein resides in the cytoplasm. The catalysed reaction is beta-D-Delta(4)-GlcA-(1-&gt;4)-beta-D-Glc-(1-&gt;4)-alpha-L-Rha-(1-&gt;3)-D-Glc + H2O = beta-D-Glc-(1-&gt;4)-alpha-L-Rha-(1-&gt;3)-D-Glc + 5-dehydro-4-deoxy-D-glucuronate. Partially inhibited by divalent metal ions such as calcium, copper, iron and mercury. Catalyzes the hydrolysis of oligosaccharides with unsaturated glucuronyl residues at the non-reducing terminal, to a sugar or an amino sugar, and an unsaturated D-glucuronic acid (GlcA), which is nonenzymatically converted immediately to alpha-keto acid. This is Unsaturated glucuronyl hydrolase (ugl) from Bacillus sp. (strain GL1).